Here is a 271-residue protein sequence, read N- to C-terminus: 4-hydroxy-tetrahydrodipicolinate reductase (271 aa).

NAD(+) is bound by residues 11-16 (GAAGRM), E37, 102-104 (GTT), and 126-129 (AGNM). H159 acts as the Proton donor/acceptor in catalysis. H160 is a (S)-2,3,4,5-tetrahydrodipicolinate binding site. K163 serves as the catalytic Proton donor. 169 to 170 (GT) lines the (S)-2,3,4,5-tetrahydrodipicolinate pocket.

Belongs to the DapB family.

Its subcellular location is the cytoplasm. The enzyme catalyses (S)-2,3,4,5-tetrahydrodipicolinate + NAD(+) + H2O = (2S,4S)-4-hydroxy-2,3,4,5-tetrahydrodipicolinate + NADH + H(+). It carries out the reaction (S)-2,3,4,5-tetrahydrodipicolinate + NADP(+) + H2O = (2S,4S)-4-hydroxy-2,3,4,5-tetrahydrodipicolinate + NADPH + H(+). The protein operates within amino-acid biosynthesis; L-lysine biosynthesis via DAP pathway; (S)-tetrahydrodipicolinate from L-aspartate: step 4/4. Functionally, catalyzes the conversion of 4-hydroxy-tetrahydrodipicolinate (HTPA) to tetrahydrodipicolinate. The chain is 4-hydroxy-tetrahydrodipicolinate reductase from Parvibaculum lavamentivorans (strain DS-1 / DSM 13023 / NCIMB 13966).